A 715-amino-acid chain; its full sequence is Polyribonucleotide nucleotidyltransferase (715 aa).

Positions 488 and 494 each coordinate Mg(2+). Residues 555 to 614 (PRIEVMHIPTDKIRDVIGSGGKVIREIVEKTGAKINIEDDGTVKIASSNAKEIEAAKKWI) enclose the KH domain. The region spanning 624–692 (GEIYEGTVVK…ERGKVRLSMK (69 aa)) is the S1 motif domain.

This sequence belongs to the polyribonucleotide nucleotidyltransferase family. Requires Mg(2+) as cofactor.

The protein resides in the cytoplasm. The catalysed reaction is RNA(n+1) + phosphate = RNA(n) + a ribonucleoside 5'-diphosphate. Functionally, involved in mRNA degradation. Catalyzes the phosphorolysis of single-stranded polyribonucleotides processively in the 3'- to 5'-direction. The polypeptide is Polyribonucleotide nucleotidyltransferase (Mesorhizobium japonicum (strain LMG 29417 / CECT 9101 / MAFF 303099) (Mesorhizobium loti (strain MAFF 303099))).